The chain runs to 150 residues: Cytochrome c oxidase subunit 5A, mitochondrial (150 aa).

Residues 1-41 (MLGAALRRCAVAATTRAGPRGLLHSARTPGPAAAIQSVRCY) constitute a mitochondrion transit peptide. The short motif at 2-17 (LGAALRRCAVAATTRA) is the SIFI-degron element. 2 positions are modified to N6-acetyllysine: Lys87 and Lys113. Position 141 is a phosphothreonine (Thr141).

It belongs to the cytochrome c oxidase subunit 5A family. As to quaternary structure, component of the cytochrome c oxidase (complex IV, CIV), a multisubunit enzyme composed of 14 subunits. The complex is composed of a catalytic core of 3 subunits MT-CO1, MT-CO2 and MT-CO3, encoded in the mitochondrial DNA, and 11 supernumerary subunits COX4I, COX5A, COX5B, COX6A, COX6B, COX6C, COX7A, COX7B, COX7C, COX8 and NDUFA4, which are encoded in the nuclear genome. The complex exists as a monomer or a dimer and forms supercomplexes (SCs) in the inner mitochondrial membrane with NADH-ubiquinone oxidoreductase (complex I, CI) and ubiquinol-cytochrome c oxidoreductase (cytochrome b-c1 complex, complex III, CIII), resulting in different assemblies (supercomplex SCI(1)III(2)IV(1) and megacomplex MCI(2)III(2)IV(2)). Interacts with AFG1L. Interacts with RAB5IF. In terms of processing, in response to mitochondrial stress, the precursor protein is ubiquitinated by the SIFI complex in the cytoplasm before mitochondrial import, leading to its degradation. Within the SIFI complex, UBR4 initiates ubiquitin chain that are further elongated or branched by KCMF1.

The protein resides in the mitochondrion inner membrane. It functions in the pathway energy metabolism; oxidative phosphorylation. Component of the cytochrome c oxidase, the last enzyme in the mitochondrial electron transport chain which drives oxidative phosphorylation. The respiratory chain contains 3 multisubunit complexes succinate dehydrogenase (complex II, CII), ubiquinol-cytochrome c oxidoreductase (cytochrome b-c1 complex, complex III, CIII) and cytochrome c oxidase (complex IV, CIV), that cooperate to transfer electrons derived from NADH and succinate to molecular oxygen, creating an electrochemical gradient over the inner membrane that drives transmembrane transport and the ATP synthase. Cytochrome c oxidase is the component of the respiratory chain that catalyzes the reduction of oxygen to water. Electrons originating from reduced cytochrome c in the intermembrane space (IMS) are transferred via the dinuclear copper A center (CU(A)) of subunit 2 and heme A of subunit 1 to the active site in subunit 1, a binuclear center (BNC) formed by heme A3 and copper B (CU(B)). The BNC reduces molecular oxygen to 2 water molecules using 4 electrons from cytochrome c in the IMS and 4 protons from the mitochondrial matrix. This is Cytochrome c oxidase subunit 5A, mitochondrial (COX5A) from Pan troglodytes (Chimpanzee).